We begin with the raw amino-acid sequence, 97 residues long: Small ribosomal subunit protein bS6 (97 aa).

It belongs to the bacterial ribosomal protein bS6 family.

Binds together with bS18 to 16S ribosomal RNA. This is Small ribosomal subunit protein bS6 from Listeria monocytogenes serotype 4b (strain CLIP80459).